We begin with the raw amino-acid sequence, 250 residues long: Ferritin-2, chloroplastic (250 aa).

A chloroplast-targeting transit peptide spans 1 to 43; sequence MLLRTAAASSLSLFNPNAEPSRSVPVLANNASRLVVRAAKGST. The extension peptide (EP) stretch occupies residues 44–76; that stretch reads NHRALTGVIFEPFEEVKKELDLVPTVPQASLAR. The region spanning 77 to 230 is the Ferritin-like diiron domain; the sequence is QKYVDESEAA…EYVAQLRRVG (154 aa). Residues glutamate 94, glutamate 129, histidine 132, glutamate 178, and glutamine 212 each coordinate Fe cation.

The protein belongs to the ferritin family. As to quaternary structure, oligomer of 24 subunits. There are two types of subunits: L (light) chain and H (heavy) chain. The major chain can be light or heavy, depending on the species and tissue type. The functional molecule forms a roughly spherical shell with a diameter of 12 nm and contains a central cavity into which the insoluble mineral iron core is deposited.

The protein resides in the plastid. It localises to the chloroplast. The catalysed reaction is 4 Fe(2+) + O2 + 4 H(+) = 4 Fe(3+) + 2 H2O. In terms of biological role, stores iron in a soluble, non-toxic, readily available form. Important for iron homeostasis. Has ferroxidase activity. Iron is taken up in the ferrous form and deposited as ferric hydroxides after oxidation. The sequence is that of Ferritin-2, chloroplastic (PFE2) from Vigna unguiculata (Cowpea).